A 394-amino-acid polypeptide reads, in one-letter code: Acetyl-CoA acetyltransferase (394 aa).

Cysteine 88 functions as the Acyl-thioester intermediate in the catalytic mechanism. Catalysis depends on proton acceptor residues histidine 349 and cysteine 379.

It belongs to the thiolase-like superfamily. Thiolase family.

Its subcellular location is the cytoplasm. The catalysed reaction is 2 acetyl-CoA = acetoacetyl-CoA + CoA. It participates in metabolic intermediate biosynthesis; (R)-mevalonate biosynthesis; (R)-mevalonate from acetyl-CoA: step 1/3. The chain is Acetyl-CoA acetyltransferase (atoB) from Escherichia coli (strain K12).